The primary structure comprises 220 residues: Telomere repeats-binding bouquet formation protein 2 (220 aa).

It belongs to the TERB2 family. In terms of assembly, component of the MAJIN-TERB1-TERB2 complex, composed of MAJIN, TERB1 and TERB2.

It localises to the chromosome. The protein localises to the telomere. The protein resides in the nucleus inner membrane. Functionally, meiosis-specific telomere-associated protein involved in meiotic telomere attachment to the nucleus inner membrane, a crucial step for homologous pairing and synapsis. Component of the MAJIN-TERB1-TERB2 complex, which promotes telomere cap exchange by mediating attachment of telomeric DNA to the inner nuclear membrane and replacement of the protective cap of telomeric chromosomes: in early meiosis, the MAJIN-TERB1-TERB2 complex associates with telomeric DNA and the shelterin/telosome complex. During prophase, the complex matures and promotes release of the shelterin/telosome complex from telomeric DNA. The chain is Telomere repeats-binding bouquet formation protein 2 (TERB2) from Homo sapiens (Human).